The following is a 293-amino-acid chain: N-acetylneuraminate lyase (293 aa).

2 residues coordinate aceneuramate: Ser47 and Thr48. Tyr136 functions as the Proton donor in the catalytic mechanism. Lys164 acts as the Schiff-base intermediate with substrate in catalysis. Positions 166, 188, 190, 191, and 207 each coordinate aceneuramate.

The protein belongs to the DapA family. NanA subfamily. As to quaternary structure, homotetramer.

It is found in the cytoplasm. It catalyses the reaction aceneuramate = aldehydo-N-acetyl-D-mannosamine + pyruvate. The protein operates within amino-sugar metabolism; N-acetylneuraminate degradation; D-fructose 6-phosphate from N-acetylneuraminate: step 1/5. In terms of biological role, catalyzes the reversible aldol cleavage of N-acetylneuraminic acid (sialic acid; Neu5Ac) to form pyruvate and N-acetylmannosamine (ManNAc) via a Schiff base intermediate. This is N-acetylneuraminate lyase from Haemophilus influenzae (strain ATCC 51907 / DSM 11121 / KW20 / Rd).